The sequence spans 172 residues: Methylated-DNA--protein-cysteine methyltransferase (172 aa).

The active-site Nucleophile; methyl group acceptor is Cys142.

This sequence belongs to the MGMT family.

The protein resides in the cytoplasm. It catalyses the reaction a 6-O-methyl-2'-deoxyguanosine in DNA + L-cysteinyl-[protein] = S-methyl-L-cysteinyl-[protein] + a 2'-deoxyguanosine in DNA. The catalysed reaction is a 4-O-methyl-thymidine in DNA + L-cysteinyl-[protein] = a thymidine in DNA + S-methyl-L-cysteinyl-[protein]. Functionally, involved in the cellular defense against the biological effects of O6-methylguanine (O6-MeG) and O4-methylthymine (O4-MeT) in DNA. Repairs the methylated nucleobase in DNA by stoichiometrically transferring the methyl group to a cysteine residue in the enzyme. This is a suicide reaction: the enzyme is irreversibly inactivated. This Pyrococcus horikoshii (strain ATCC 700860 / DSM 12428 / JCM 9974 / NBRC 100139 / OT-3) protein is Methylated-DNA--protein-cysteine methyltransferase.